Consider the following 500-residue polypeptide: ACT domain-containing protein ACR2 (500 aa).

ACT domains lie at Val39–Asn121, Ala136–Ala213, Ile298–Glu373, and Lys376–Ser459. The tract at residues Glu450 to Arg478 is disordered. Residues Pro462–Pro474 are compositionally biased toward polar residues.

Its function is as follows. May bind amino acids. This Arabidopsis thaliana (Mouse-ear cress) protein is ACT domain-containing protein ACR2.